The primary structure comprises 746 residues: UvrABC system protein C (746 aa).

In terms of domain architecture, GIY-YIG spans 18–97 (AKPGVYKWRD…IKEFDPRFNV (80 aa)). The 36-residue stretch at 211–246 (RPYIAQLTRDMKEASAELEFEKAARLRDQIQMLETV) folds into the UVR domain. The disordered stretch occupies residues 557–577 (ANGNDNGEGGSDISGKGHAVP).

This sequence belongs to the UvrC family. Interacts with UvrB in an incision complex.

The protein localises to the cytoplasm. Its function is as follows. The UvrABC repair system catalyzes the recognition and processing of DNA lesions. UvrC both incises the 5' and 3' sides of the lesion. The N-terminal half is responsible for the 3' incision and the C-terminal half is responsible for the 5' incision. This is UvrABC system protein C from Bifidobacterium longum (strain DJO10A).